We begin with the raw amino-acid sequence, 338 residues long: D-erythrose-4-phosphate dehydrogenase (338 aa).

12–13 (RI) serves as a coordination point for NAD(+). Substrate-binding positions include 154–156 (SCT), Arg200, 213–214 (TK), and Arg236. Cys155 acts as the Nucleophile in catalysis. Asn318 is a binding site for NAD(+).

This sequence belongs to the glyceraldehyde-3-phosphate dehydrogenase family. Epd subfamily. As to quaternary structure, homotetramer.

It localises to the cytoplasm. It catalyses the reaction D-erythrose 4-phosphate + NAD(+) + H2O = 4-phospho-D-erythronate + NADH + 2 H(+). Its pathway is cofactor biosynthesis; pyridoxine 5'-phosphate biosynthesis; pyridoxine 5'-phosphate from D-erythrose 4-phosphate: step 1/5. Functionally, catalyzes the NAD-dependent conversion of D-erythrose 4-phosphate to 4-phosphoerythronate. In Yersinia enterocolitica serotype O:8 / biotype 1B (strain NCTC 13174 / 8081), this protein is D-erythrose-4-phosphate dehydrogenase.